A 400-amino-acid polypeptide reads, in one-letter code: Nicotinate phosphoribosyltransferase (400 aa).

The residue at position 220 (histidine 220) is a Phosphohistidine; by autocatalysis.

This sequence belongs to the NAPRTase family. In terms of processing, transiently phosphorylated on a His residue during the reaction cycle. Phosphorylation strongly increases the affinity for substrates and increases the rate of nicotinate D-ribonucleotide production. Dephosphorylation regenerates the low-affinity form of the enzyme, leading to product release.

It carries out the reaction nicotinate + 5-phospho-alpha-D-ribose 1-diphosphate + ATP + H2O = nicotinate beta-D-ribonucleotide + ADP + phosphate + diphosphate. It participates in cofactor biosynthesis; NAD(+) biosynthesis; nicotinate D-ribonucleotide from nicotinate: step 1/1. Its function is as follows. Catalyzes the synthesis of beta-nicotinate D-ribonucleotide from nicotinate and 5-phospho-D-ribose 1-phosphate at the expense of ATP. The chain is Nicotinate phosphoribosyltransferase from Salmonella typhimurium (strain LT2 / SGSC1412 / ATCC 700720).